Consider the following 224-residue polypeptide: Proteasome subunit beta (224 aa).

The propeptide at 1–6 (MDVMKG) is removed in mature form; by autocatalysis. Thr7 functions as the Nucleophile in the catalytic mechanism.

The protein belongs to the peptidase T1B family. As to quaternary structure, the 20S proteasome core is composed of 14 alpha and 14 beta subunits that assemble into four stacked heptameric rings, resulting in a barrel-shaped structure. The two inner rings, each composed of seven catalytic beta subunits, are sandwiched by two outer rings, each composed of seven alpha subunits. The catalytic chamber with the active sites is on the inside of the barrel. Has a gated structure, the ends of the cylinder being occluded by the N-termini of the alpha-subunits. Is capped at one or both ends by the proteasome regulatory ATPase, PAN.

The protein resides in the cytoplasm. It carries out the reaction Cleavage of peptide bonds with very broad specificity.. With respect to regulation, the formation of the proteasomal ATPase PAN-20S proteasome complex, via the docking of the C-termini of PAN into the intersubunit pockets in the alpha-rings, triggers opening of the gate for substrate entry. Interconversion between the open-gate and close-gate conformations leads to a dynamic regulation of the 20S proteasome proteolysis activity. Its function is as follows. Component of the proteasome core, a large protease complex with broad specificity involved in protein degradation. The M.jannaschii proteasome is able to cleave oligopeptides after Glu, Asp, Tyr, Phe, Trp, slightly after Arg, but not after Ala. Thus, displays caspase-like and chymotrypsin-like activities and low level of trypsin-like activity. The sequence is that of Proteasome subunit beta from Methanocaldococcus jannaschii (strain ATCC 43067 / DSM 2661 / JAL-1 / JCM 10045 / NBRC 100440) (Methanococcus jannaschii).